The primary structure comprises 382 residues: Flap endonuclease 1 (382 aa).

The tract at residues 1 to 105 (MGIKGLNAII…HELTKRSSRR (105 aa)) is N-domain. Aspartate 34 lines the Mg(2+) pocket. Positions 47 and 71 each coordinate DNA. Residues aspartate 87, glutamate 156, glutamate 158, aspartate 177, and aspartate 179 each contribute to the Mg(2+) site. Positions 120-251 (EKMKQERRLV…VTALKLIKTH (132 aa)) are I-domain. Residue glutamate 156 coordinates DNA. Positions 229 and 231 each coordinate DNA. Position 231 (aspartate 231) interacts with Mg(2+). The interval 339–347 (IQGRLDGFF) is interaction with PCNA. Residues 358 to 382 (AAAAKRAQENKKLNKNKNKVTKGRR) form a disordered region. The segment covering 370–382 (LNKNKNKVTKGRR) has biased composition (basic residues).

It belongs to the XPG/RAD2 endonuclease family. FEN1 subfamily. In terms of assembly, interacts with PCNA. Three molecules of RAD27 bind to one PCNA trimer with each molecule binding to one PCNA monomer. PCNA stimulates the nuclease activity without altering cleavage specificity. Requires Mg(2+) as cofactor. Post-translationally, phosphorylated. Phosphorylation upon DNA damage induces relocalization to the nuclear plasma.

The protein localises to the nucleus. Its subcellular location is the nucleolus. The protein resides in the nucleoplasm. It localises to the mitochondrion. In terms of biological role, structure-specific nuclease with 5'-flap endonuclease and 5'-3' exonuclease activities involved in DNA replication and repair. During DNA replication, cleaves the 5'-overhanging flap structure that is generated by displacement synthesis when DNA polymerase encounters the 5'-end of a downstream Okazaki fragment. It enters the flap from the 5'-end and then tracks to cleave the flap base, leaving a nick for ligation. Also involved in the long patch base excision repair (LP-BER) pathway, by cleaving within the apurinic/apyrimidinic (AP) site-terminated flap. Acts as a genome stabilization factor that prevents flaps from equilibrating into structures that lead to duplications and deletions. Also possesses 5'-3' exonuclease activity on nicked or gapped double-stranded DNA, and exhibits RNase H activity. Also involved in replication and repair of rDNA and in repairing mitochondrial DNA. The protein is Flap endonuclease 1 of Saccharomyces cerevisiae (strain YJM789) (Baker's yeast).